Here is a 390-residue protein sequence, read N- to C-terminus: S-adenosylmethionine synthase 3 (390 aa).

Glu9 is a Mg(2+) binding site. ATP is bound at residue His15. Glu43 is a K(+) binding site. L-methionine contacts are provided by Glu56 and Gln99. Residues Asp167 to Lys169, Ser235 to Phe238, Asp246, Arg252 to Lys253, Ala269, Lys273, and Lys277 each bind ATP. L-methionine is bound at residue Asp246. Lys277 lines the L-methionine pocket.

It belongs to the AdoMet synthase family. Homotetramer. Mn(2+) is required as a cofactor. Mg(2+) serves as cofactor. Requires Co(2+) as cofactor. The cofactor is K(+). It depends on NH4(+) as a cofactor. Mostly expressed in roots, and, to a lower extent, in hypocotyls and cotyledons.

Its subcellular location is the cytoplasm. The enzyme catalyses L-methionine + ATP + H2O = S-adenosyl-L-methionine + phosphate + diphosphate. Its pathway is amino-acid biosynthesis; S-adenosyl-L-methionine biosynthesis; S-adenosyl-L-methionine from L-methionine: step 1/1. With respect to regulation, inhibited by products of SAMS reaction (SAM, Pi, PPi), substrate analogs (cycloleucine and ethionine), and alternative nucleotides (GTP, CTP and ADP). Strongly repressed by PPPi. Catalyzes the formation of S-adenosylmethionine from methionine and ATP. The reaction comprises two steps that are both catalyzed by the same enzyme: formation of S-adenosylmethionine (AdoMet) and triphosphate, and subsequent hydrolysis of the triphosphate. The protein is S-adenosylmethionine synthase 3 (SAMS3) of Catharanthus roseus (Madagascar periwinkle).